The primary structure comprises 1381 residues: Hepatocyte growth factor receptor (1381 aa).

Residues 1-24 form the signal peptide; the sequence is MKAPAVLAPGILVLLFTLVQKSDG. At 25-934 the chain is on the extracellular side; it reads ECKEALVKSE…VQPDQNFTGL (910 aa). The 489-residue stretch at 27 to 515 folds into the Sema domain; it reads KEALVKSEMN…TGKKITKIPL (489 aa). N-linked (GlcNAc...) asparagine glycosylation occurs at N45. Intrachain disulfides connect C95/C101, C98/C160, C133/C141, and C172/C175. N106 carries an N-linked (GlcNAc...) asparagine glycan. N202 and N358 each carry an N-linked (GlcNAc...) asparagine glycan. 2 disulfide bridges follow: C298-C363 and C385-C397. N399, N405, and N449 each carry an N-linked (GlcNAc...) asparagine glycan. 4 disulfides stabilise this stretch: C520–C538, C526–C561, C529–C545, and C541–C551. N553 is a glycosylation site (N-linked (GlcNAc...) asparagine). 3 IPT/TIG domains span residues 563–655, 657–739, and 742–836; these read PTIY…FSYV, PIIT…FSYR, and PIVY…LIYV. An O-linked (Man) threonine glycan is attached at T582. N-linked (GlcNAc...) asparagine glycosylation is found at N607 and N635. O-linked (Man) threonine glycans are attached at residues T676 and T761. N-linked (GlcNAc...) asparagine glycosylation is found at N785, N879, and N930. The chain crosses the membrane as a helical span at residues 935–955; it reads IVGVVSISIILLLLLGLFLWL. Over 956–1381 the chain is Cytoplasmic; that stretch reads KRRKQIKDLG…QDNVDGEVDT (426 aa). A Phosphoserine modification is found at S966. T977 carries the phosphothreonine modification. Phosphoserine is present on residues S990, S997, and S1000. Y1003 is modified (phosphotyrosine). The 268-residue stretch at 1078 to 1345 folds into the Protein kinase domain; it reads VHFNEVIGRG…RISAIFSTFI (268 aa). Residues 1084 to 1092 and K1110 contribute to the ATP site; that span reads IGRGHFGCV. D1204 functions as the Proton acceptor in the catalytic mechanism. The tract at residues 1212–1381 is interaction with RANBP9; the sequence is LDEKFTVKVA…QDNVDGEVDT (170 aa). Y1230 is subject to Phosphotyrosine. Residues Y1234 and Y1235 each carry the phosphotyrosine; by autocatalysis modification. Position 1289 is a phosphothreonine (T1289). Residues 1320–1359 form an interaction with MUC20 region; it reads WHPKAELRPSFSELVSRISAIFSTFIGEHYVHVNATYVNV. Y1349 and Y1356 each carry phosphotyrosine; by autocatalysis. Y1365 carries the phosphotyrosine modification.

The protein belongs to the protein kinase superfamily. Tyr protein kinase family. Heterodimer made of an alpha chain (50 kDa) and a beta chain (145 kDa) which are disulfide linked. Binds PLXNB1. Interacts when phosphorylated with downstream effectors including STAT3, PIK3R1, SRC, PCLG1, GRB2 and GAB1. Interacts with SPSB1, SPSB2 and SPSB4. Interacts with INPP5D/SHIP1. When phosphorylated at Tyr-1356, interacts with INPPL1/SHIP2. Interacts with RANBP9 and RANBP10, as well as SPSB1, SPSB2, SPSB3 and SPSB4. SPSB1 binding occurs in the presence and in the absence of HGF, however HGF treatment has a positive effect on this interaction. Interacts with MUC20; prevents interaction with GRB2 and suppresses hepatocyte growth factor-induced cell proliferation. Interacts with GRB10. Interacts with PTPN1 and PTPN2. Interacts with HSP90AA1 and HSP90AB1; the interaction suppresses MET kinase activity. Interacts with tensin TNS3. Interacts (when phosphorylated) with tensin TNS4 (via SH2 domain); the interaction increases MET protein stability by inhibiting MET endocytosis and subsequent lysosomal degradation. Post-translationally, autophosphorylated in response to ligand binding on Tyr-1234 and Tyr-1235 in the kinase domain leading to further phosphorylation of Tyr-1349 and Tyr-1356 in the C-terminal multifunctional docking site. Dephosphorylated by PTPRJ at Tyr-1349 and Tyr-1365. Dephosphorylated by PTPN1 and PTPN2. Ubiquitinated. Ubiquitination by CBL regulates the receptor stability and activity through proteasomal degradation. In terms of processing, O-mannosylation of IPT/TIG domains by TMEM260 is required for protein maturation. O-mannosylated residues are composed of single mannose glycans that are not elongated or modified.

It localises to the membrane. The catalysed reaction is L-tyrosyl-[protein] + ATP = O-phospho-L-tyrosyl-[protein] + ADP + H(+). In its inactive state, the C-terminal tail interacts with the catalytic domain and inhibits the kinase activity. Upon ligand binding, the C-terminal tail is displaced and becomes phosphorylated, thus increasing the kinase activity. Functionally, receptor tyrosine kinase that transduces signals from the extracellular matrix into the cytoplasm by binding to hepatocyte growth factor/HGF ligand. Regulates many physiological processes including proliferation, scattering, morphogenesis and survival. Ligand binding at the cell surface induces autophosphorylation of MET on its intracellular domain that provides docking sites for downstream signaling molecules. Following activation by ligand, interacts with the PI3-kinase subunit PIK3R1, PLCG1, SRC, GRB2, STAT3 or the adapter GAB1. Recruitment of these downstream effectors by MET leads to the activation of several signaling cascades including the RAS-ERK, PI3 kinase-AKT, or PLCgamma-PKC. The RAS-ERK activation is associated with the morphogenetic effects while PI3K/AKT coordinates prosurvival effects. During embryonic development, MET signaling plays a role in gastrulation, development and migration of muscles and neuronal precursors, angiogenesis and kidney formation. In adults, participates in wound healing as well as organ regeneration and tissue remodeling. Also promotes differentiation and proliferation of hematopoietic cells. The protein is Hepatocyte growth factor receptor (MET) of Equus caballus (Horse).